The chain runs to 301 residues: MLPRTMFSYGKENAFPVTPISNRNGTKGAGSKRAPLGSTKQSNAPSSVTVPRTVLGGKSTNISKFISAPSTKKMSPMDISMDSPTILEPNSQGISRSAVQERSKRLSASPRRSSLTDTPLPNELEEDIEYMPPPVHLDPIQSLGFDDVAIDCETLDPWPSMQNKATSVTIRNTPASDFHVYKEFSDDDPIQFPLLSVDGDSPLTEKDTNLTTPATLKASDQQRKVLEKPSVSKQSSSRTRLSTVYRTKLASGKSIPRPLSHKLTRPRVTASGNSRRRPLSRSIHSLSSSRIDFSSLDTGLL.

3 disordered regions span residues 1 to 55 (MLPR…RTVL), 82 to 120 (DSPT…DTPL), and 218 to 284 (ASDQ…RSIH). The D-box 1 signature appears at 33 to 36 (RAPL). Over residues 38–50 (STKQSNAPSSVTV) the composition is skewed to polar residues. Positions 52–55 (RTVL) match the D-box 2 motif. Polar residues-rich tracts occupy residues 88–98 (EPNSQGISRSA), 110–119 (PRRSSLTDTP), and 231–245 (VSKQ…STVY). Repeats lie at residues 250-260 (ASGKSIPRPLS) and 270-280 (ASGNSRRRPLS).

It belongs to the securin family. In terms of assembly, interacts with the caspase-like cut1, and prevents its protease activity probably by covering its active site. Post-translationally, ubiquitinated by the anaphase promoting complex (APC) at the onset of anaphase, conducting to its degradation.

It localises to the cytoplasm. The protein localises to the nucleus. Its function is as follows. Regulatory protein, which plays a central role in chromosome stability. Probably acts by blocking the action of key proteins. During the mitosis, it blocks separase/cut1 function, preventing the proteolysis of the cohesin complex and the subsequent segregation of the chromosomes. At the onset of anaphase, it is ubiquitinated, conducting to its destruction and to the liberation of cut1. This Schizosaccharomyces pombe (strain 972 / ATCC 24843) (Fission yeast) protein is Securin (cut2).